A 559-amino-acid polypeptide reads, in one-letter code: Acetolactate synthase, catabolic (559 aa).

Residues Arg159, 263 to 284 (FNNQ…IGYS), and 304 to 323 (DVLP…LVGD) each bind FAD. Asp447 lines the Mg(2+) pocket.

It belongs to the TPP enzyme family. As to quaternary structure, homodimer.

It carries out the reaction 2 pyruvate + H(+) = (2S)-2-acetolactate + CO2. Its pathway is polyol metabolism; (R,R)-butane-2,3-diol biosynthesis; (R,R)-butane-2,3-diol from pyruvate: step 1/3. The sequence is that of Acetolactate synthase, catabolic (budB) from Raoultella terrigena (Klebsiella terrigena).